The following is a 419-amino-acid chain: Tyrosine--tRNA ligase 2 (419 aa).

L-tyrosine is bound at residue tyrosine 34. Residues 39 to 48 (PTGDSMHIGH) carry the 'HIGH' region motif. L-tyrosine is bound by residues tyrosine 168 and glutamine 172. The short motif at 230–234 (KFGKS) is the 'KMSKS' region element. Lysine 233 provides a ligand contact to ATP. An S4 RNA-binding domain is found at 352–418 (KNIVEWLVDL…GKKNYSLVKL (67 aa)).

The protein belongs to the class-I aminoacyl-tRNA synthetase family. TyrS type 1 subfamily. In terms of assembly, homodimer.

The protein resides in the cytoplasm. The enzyme catalyses tRNA(Tyr) + L-tyrosine + ATP = L-tyrosyl-tRNA(Tyr) + AMP + diphosphate + H(+). Its function is as follows. Catalyzes the attachment of tyrosine to tRNA(Tyr) in a two-step reaction: tyrosine is first activated by ATP to form Tyr-AMP and then transferred to the acceptor end of tRNA(Tyr). The chain is Tyrosine--tRNA ligase 2 from Bacillus cereus (strain ATCC 10987 / NRS 248).